A 365-amino-acid chain; its full sequence is Eukaryotic translation initiation factor 3 subunit H (365 aa).

The MPN domain occupies 11-160 (VKVEALVVMK…LRAFRLSPKF (150 aa)).

Belongs to the eIF-3 subunit H family. In terms of assembly, component of the eukaryotic translation initiation factor 3 (eIF-3) complex.

Its subcellular location is the cytoplasm. Its function is as follows. Component of the eukaryotic translation initiation factor 3 (eIF-3) complex, which is involved in protein synthesis of a specialized repertoire of mRNAs and, together with other initiation factors, stimulates binding of mRNA and methionyl-tRNAi to the 40S ribosome. The eIF-3 complex specifically targets and initiates translation of a subset of mRNAs involved in cell proliferation. This is Eukaryotic translation initiation factor 3 subunit H from Aspergillus fumigatus (strain CBS 144.89 / FGSC A1163 / CEA10) (Neosartorya fumigata).